Here is a 324-residue protein sequence, read N- to C-terminus: tRNA U34 carboxymethyltransferase (324 aa).

Residues K91, W105, K110, G130, D152–S154, I181–E182, M196, Y200, and R315 contribute to the carboxy-S-adenosyl-L-methionine site.

This sequence belongs to the class I-like SAM-binding methyltransferase superfamily. CmoB family. In terms of assembly, homotetramer.

It carries out the reaction carboxy-S-adenosyl-L-methionine + 5-hydroxyuridine(34) in tRNA = 5-carboxymethoxyuridine(34) in tRNA + S-adenosyl-L-homocysteine + H(+). In terms of biological role, catalyzes carboxymethyl transfer from carboxy-S-adenosyl-L-methionine (Cx-SAM) to 5-hydroxyuridine (ho5U) to form 5-carboxymethoxyuridine (cmo5U) at position 34 in tRNAs. This chain is tRNA U34 carboxymethyltransferase, found in Aliivibrio salmonicida (strain LFI1238) (Vibrio salmonicida (strain LFI1238)).